We begin with the raw amino-acid sequence, 115 residues long: MHVFNFAALFTVLATFTATAAAADQGSNTFDQRYQGYPWRPANGPIREEKQENVGHRRGGAEYFTSGSPSIAAEDYSAKNAPSRFEQWKAQQKERAERKQDRGLNGIRRVENYYP.

Positions 1 to 22 are cleaved as a signal peptide; sequence MHVFNFAALFTVLATFTATAAA. Residues 24–115 are disordered; the sequence is DQGSNTFDQR…GIRRVENYYP (92 aa). Basic and acidic residues-rich tracts occupy residues 46 to 55 and 91 to 115; these read IREEKQENVG and QQKERAERKQDRGLNGIRRVENYYP.

Its subcellular location is the secreted. The protein resides in the host cytoplasm. Secreted effector involved in biotrophic colonization of plant cells. Induces an early, basal defense response in susceptible rice, including rapid callose deposition and ROS production in leaves and calli. Also promotes sporulation and mycelia growth suggesting a role across the whole process of interaction, from the biotrophic phase to sporulation. The protein is Biotrophy-associated secreted protein 1 of Pyricularia oryzae (strain 70-15 / ATCC MYA-4617 / FGSC 8958) (Rice blast fungus).